A 368-amino-acid polypeptide reads, in one-letter code: Ribulose bisphosphate carboxylase-like protein 1 (368 aa).

Belongs to the RuBisCO large chain family. Type IV subfamily.

Functionally, unknown. Probably does not have RuBisCO activity. The protein is Ribulose bisphosphate carboxylase-like protein 1 (rlp1) of Rhodopseudomonas palustris (strain ATCC BAA-98 / CGA009).